The chain runs to 127 residues: Small ribosomal subunit protein eS8 (127 aa).

It belongs to the eukaryotic ribosomal protein eS8 family. Part of the 30S ribosomal subunit.

The protein is Small ribosomal subunit protein eS8 of Pyrococcus furiosus (strain ATCC 43587 / DSM 3638 / JCM 8422 / Vc1).